Reading from the N-terminus, the 195-residue chain is Shikimate kinase (195 aa).

Residue 26–31 participates in ATP binding; sequence GSGKST. Serine 30 lines the Mg(2+) pocket. 3 residues coordinate substrate: aspartate 48, arginine 72, and glycine 94. Arginine 132 is a binding site for ATP. Arginine 151 contacts substrate.

The protein belongs to the shikimate kinase family. Monomer. It depends on Mg(2+) as a cofactor.

The protein resides in the cytoplasm. It catalyses the reaction shikimate + ATP = 3-phosphoshikimate + ADP + H(+). It participates in metabolic intermediate biosynthesis; chorismate biosynthesis; chorismate from D-erythrose 4-phosphate and phosphoenolpyruvate: step 5/7. Catalyzes the specific phosphorylation of the 3-hydroxyl group of shikimic acid using ATP as a cosubstrate. The protein is Shikimate kinase of Synechococcus sp. (strain RCC307).